A 521-amino-acid polypeptide reads, in one-letter code: Cytochrome P450 monooxygenase 105 (521 aa).

The chain crosses the membrane as a helical span at residues 12-32 (GVASPATLAVAAVTFLTALVL). Residues N218, N274, and N317 are each glycosylated (N-linked (GlcNAc...) asparagine). C449 serves as a coordination point for heme.

This sequence belongs to the cytochrome P450 family. Requires heme as cofactor.

Its subcellular location is the membrane. It functions in the pathway secondary metabolite biosynthesis. Its function is as follows. Cytochrome P450 monooxygenase that is able to use anthracene, carbazole, pyrene, phenanthrene and trans-stilbene as substrates for oxidation. These multifunctional properties against a series of polycyclic aromatic hydrocarbons (PAHs) suggest that CYP105 would play important roles, at least in part, in fungal metabolic systems involved in xenobiotic detoxification. This chain is Cytochrome P450 monooxygenase 105, found in Postia placenta (strain ATCC 44394 / Madison 698-R) (Brown rot fungus).